The sequence spans 792 residues: Alpha-1,6-mannosylglycoprotein 6-beta-N-acetylglucosaminyltransferase B (792 aa).

The Cytoplasmic portion of the chain corresponds to 1–24 (MITVNPDGKIMVRRCLVTLRPFRL). The helical; Signal-anchor for type II membrane protein transmembrane segment at 25-45 (FVLGIGFFTLCFLMTSLGGQF) threads the bilayer. Over 46 to 792 (SARRLGDSPF…GQVALCQGCL (747 aa)) the chain is Lumenal. Asn-127 carries an N-linked (GlcNAc...) asparagine glycan. Cystine bridges form between Cys-157/Cys-195, Cys-168/Cys-208, Cys-184/Cys-353, and Cys-387/Cys-644. N-linked (GlcNAc...) asparagine glycosylation is present at Asn-675. 5 disulfides stabilise this stretch: Cys-700–Cys-775, Cys-704–Cys-777, Cys-711–Cys-764, Cys-732–Cys-753, and Cys-788–Cys-791.

Belongs to the glycosyltransferase 18 family. Mn(2+) is required as a cofactor. As to expression, present in brain (at protein level). Predominantly expressed in hippocampus, superficial layers of the brain cortex, striatum, nucleus accumbens, a subset of nuclei in the thalamus, inferior colliculus, brain stem and cerebellum.

It is found in the golgi apparatus membrane. It catalyses the reaction N(4)-{beta-D-GlcNAc-(1-&gt;2)-[beta-D-GlcNAc-(1-&gt;4)]-alpha-D-Man-(1-&gt;3)-[beta-D-GlcNAc-(1-&gt;2)-alpha-D-Man-(1-&gt;6)]-beta-D-Man-(1-&gt;4)-beta-D-GlcNAc-(1-&gt;4)-beta-D-GlcNAc}-L-asparaginyl-[protein] + UDP-N-acetyl-alpha-D-glucosamine = N(4)-{beta-D-GlcNAc-(1-&gt;2)-[beta-D-GlcNAc-(1-&gt;4)]-alpha-D-Man-(1-&gt;3)-[beta-D-GlcNAc-(1-&gt;2)-[beta-D-GlcNAc-(1-&gt;6)]-alpha-D-Man-(1-&gt;6)]-beta-D-Man-(1-&gt;4)-beta-D-GlcNAc-(1-&gt;4)-beta-D-GlcNAc}-L-asparaginyl-[protein] + UDP + H(+). It carries out the reaction 3-O-[N-acetyl-beta-D-glucosaminyl-(1-&gt;2)-alpha-D-mannosyl]-L-seryl-[protein] + UDP-N-acetyl-alpha-D-glucosamine = O(3)-{N-acetyl-beta-D-glucosaminyl-(1-&gt;2)-[N-acetyl-beta-D-glucosaminyl-(1-&gt;6)]-alpha-D-mannosyl}-L-seryl-[protein] + UDP + H(+). The catalysed reaction is 3-O-[N-acetyl-beta-D-glucosaminyl-(1-&gt;2)-alpha-D-mannosyl]-L-threonyl-[protein] + UDP-N-acetyl-alpha-D-glucosamine = O(3)-{N-acetyl-beta-D-glucosaminyl-(1-&gt;2)-[N-acetyl-beta-D-glucosaminyl-(1-&gt;6)]-alpha-D-mannosyl}-L-threonyl-[protein] + UDP + H(+). The protein operates within protein modification; protein glycosylation. In terms of biological role, glycosyltransferase that acts on alpha-linked mannose of N-glycans and O-mannosyl glycans. Catalyzes the transfer of N-acetylglucosamine (GlcNAc) to the beta 1-6 linkage of the mannose residue of GlcNAc-beta1,2-Man-alpha on both the alpha1,3- and alpha1,6-linked mannose arms in the core structure of N-glycan. Also acts on the GlcNAc-beta1,2-Man-alpha1-Ser/Thr moiety, forming a 2,6-branched structure in brain O-mannosyl glycan. Plays an active role in modulating integrin and laminin-dependent adhesion and migration of neuronal cells via its activity in the O-mannosyl glycan pathway. This is Alpha-1,6-mannosylglycoprotein 6-beta-N-acetylglucosaminyltransferase B (Mgat5b) from Mus musculus (Mouse).